The following is a 474-amino-acid chain: UDP-N-acetylmuramoylalanine--D-glutamate ligase (474 aa).

134–140 contributes to the ATP binding site; the sequence is GSNGKST.

Belongs to the MurCDEF family.

It localises to the cytoplasm. The catalysed reaction is UDP-N-acetyl-alpha-D-muramoyl-L-alanine + D-glutamate + ATP = UDP-N-acetyl-alpha-D-muramoyl-L-alanyl-D-glutamate + ADP + phosphate + H(+). It functions in the pathway cell wall biogenesis; peptidoglycan biosynthesis. In terms of biological role, cell wall formation. Catalyzes the addition of glutamate to the nucleotide precursor UDP-N-acetylmuramoyl-L-alanine (UMA). The protein is UDP-N-acetylmuramoylalanine--D-glutamate ligase of Thiobacillus denitrificans (strain ATCC 25259 / T1).